The sequence spans 508 residues: Glycogen synthase (508 aa).

Lys-27 contacts ADP-alpha-D-glucose.

Belongs to the glycosyltransferase 1 family. Bacterial/plant glycogen synthase subfamily.

It carries out the reaction [(1-&gt;4)-alpha-D-glucosyl](n) + ADP-alpha-D-glucose = [(1-&gt;4)-alpha-D-glucosyl](n+1) + ADP + H(+). It participates in glycan biosynthesis; glycogen biosynthesis. Functionally, synthesizes alpha-1,4-glucan chains using ADP-glucose. This is Glycogen synthase from Photobacterium profundum (strain SS9).